A 457-amino-acid polypeptide reads, in one-letter code: Multidrug resistance protein MdtK (457 aa).

A run of 12 helical transmembrane segments spans residues 11 to 31, 46 to 66, 93 to 113, 127 to 147, 160 to 180, 188 to 208, 243 to 263, 278 to 300, 316 to 336, 350 to 370, 387 to 407, and 418 to 438; these read LLAL…MGVV, AVAV…GLLL, WLAF…DHII, AVGF…FQVL, GMVI…IFIY, LGGV…FLMM, LPVA…ALLV, LNFS…IRVG, YTSI…TVVF, VVVM…SDAI, IFFI…YLLG, and PSGF…LMAL.

The protein belongs to the multi antimicrobial extrusion (MATE) (TC 2.A.66.1) family. MdtK subfamily.

It is found in the cell inner membrane. Its function is as follows. Multidrug efflux pump that functions probably as a Na(+)/drug antiporter. In Yersinia enterocolitica serotype O:8 / biotype 1B (strain NCTC 13174 / 8081), this protein is Multidrug resistance protein MdtK.